Reading from the N-terminus, the 355-residue chain is N6-mAMP deaminase (355 aa).

Positions 13 and 15 each coordinate Zn(2+). Residues His15, Asn17, His65, 97 to 100 (TTPK), Asp160, and Gly190 contribute to the N(6)-methyl-AMP site. His217 provides a ligand contact to Zn(2+). Residues Glu220, Asp295, and Asp296 each coordinate N(6)-methyl-AMP. Residue Glu220 is the Proton donor of the active site. Asp295 is a binding site for Zn(2+).

Belongs to the metallo-dependent hydrolases superfamily. Adenosine and AMP deaminases family. Monomer. The cofactor is Zn(2+).

It localises to the cytoplasm. The protein resides in the cytosol. It catalyses the reaction N(6)-methyl-AMP + H2O + H(+) = IMP + methylamine. In terms of biological role, catalyzes the hydrolysis of the free cytosolic methylated adenosine nucleotide N(6)-methyl-AMP (N6-mAMP) to produce inositol monophosphate (IMP) and methylamine. Is required for the catabolism of cytosolic N6-mAMP, which is derived from the degradation of mRNA containing N6-methylated adenine (m6A). Does not possess deaminase activity toward adenosine, AMP, N6-methyladenosine, or N6-mATP in vitro. The polypeptide is N6-mAMP deaminase (Arabidopsis thaliana (Mouse-ear cress)).